The chain runs to 394 residues: T-cell acute lymphocytic leukemia protein 1 (394 aa).

Residues 1-17 are compositionally biased toward basic and acidic residues; that stretch reads MSLKMMERLSTDMDGTR. Positions 1 to 49 are disordered; the sequence is MSLKMMERLSTDMDGTRDVASPPARQDAAEPERTVELSGVKEGAAPNSP. A run of 7 repeats spans residues 83-89, 94-100, 105-111, 116-122, 127-133, 149-155, and 167-173. A 7 X 7 AA approximate repeats of [TS]-E-L-C-R-[AP]-P region spans residues 83-173; that stretch reads TELCRATLTP…TATTELCRPP (91 aa). One can recognise a bHLH domain in the interval 262–314; it reads VRRIFTNSRERWRQQNVNGAFAELRKLIPTHPPDKKLSKNEILRLAMKYINFL. Residues 347 to 394 form a disordered region; sequence LSPNSSCGSSLDGAPSPDSYSEEHDALDSKHSRNLHQAMLPIDGSGQR. A compositionally biased stretch (basic and acidic residues) spans 367–377; sequence SEEHDALDSKH.

As to expression, first expressed in patches on the ventral side of the embryo in a region that will give rise to hematopoietic tissue. By late neurula stages, expressed throughout the ventral blood island region. By tailbud stages, expression extends to probable vascular progenitor cells, but is excluded from the presumptive liver anlage. Also expressed in the central nervous system at the tailbud stage.

It is found in the nucleus. Transcription factor that acts synergistically with lmo2 and gata1 to specify embryonic dorsal mesoderm to a hematopoietic fate. In Xenopus laevis (African clawed frog), this protein is T-cell acute lymphocytic leukemia protein 1.